The chain runs to 436 residues: Serine/threonine-protein kinase 40 (436 aa).

A compositionally biased stretch (basic and acidic residues) spans 1–10; the sequence is MKRRASDRGA. Positions 1–25 are disordered; sequence MKRRASDRGAGETSARAKALGSGIS. The 298-residue stretch at 35-332 folds into the Protein kinase domain; that stretch reads FILGPRLGNS…DVLEALSSII (298 aa). ATP is bound by residues 41–49 and lysine 66; that span reads LGNSPVPSI. Residue aspartate 197 is the Proton acceptor of the active site. The interval 396 to 417 is disordered; the sequence is RSWVPKRQSGAGVPPVRRLGHD.

This sequence belongs to the protein kinase superfamily. CAMK Ser/Thr protein kinase family.

The protein resides in the nucleus. It localises to the cytoplasm. The enzyme catalyses L-seryl-[protein] + ATP = O-phospho-L-seryl-[protein] + ADP + H(+). The catalysed reaction is L-threonyl-[protein] + ATP = O-phospho-L-threonyl-[protein] + ADP + H(+). May be a negative regulator of NF-kappa-B and p53-mediated gene transcription. In Bos taurus (Bovine), this protein is Serine/threonine-protein kinase 40 (STK40).